A 206-amino-acid chain; its full sequence is RNA pyrophosphohydrolase (206 aa).

Residues 6–150 (GYRPNVGIVI…KRDVYRKVMK (145 aa)) form the Nudix hydrolase domain. Positions 38 to 59 (GGINEGENIETAMYRELYEEVG) match the Nudix box motif. A compositionally biased stretch (basic and acidic residues) spans 162–191 (KPETVEKPRVERTEKRDFQKRDNQKREFRK). Positions 162-206 (KPETVEKPRVERTEKRDFQKRDNQKREFRKSARMWNNSHQKGKAQ) are disordered.

The protein belongs to the Nudix hydrolase family. RppH subfamily. It depends on a divalent metal cation as a cofactor.

Accelerates the degradation of transcripts by removing pyrophosphate from the 5'-end of triphosphorylated RNA, leading to a more labile monophosphorylated state that can stimulate subsequent ribonuclease cleavage. In Actinobacillus pleuropneumoniae serotype 5b (strain L20), this protein is RNA pyrophosphohydrolase.